The following is a 1076-amino-acid chain: Enhancer of mRNA-decapping protein 4-like protein pdc1 (1076 aa).

Low complexity-rich tracts occupy residues 1–19 (MNEQ…LPNL) and 53–69 (SSLL…SNQS). Disordered stretches follow at residues 1-82 (MNEQ…ASHS), 95-127 (GAKP…FNPV), and 139-204 (STGP…AEEQ). Polar residues predominate over residues 70-82 (PSNSGPKYYASHS). The segment covering 153-173 (NDSQDTAFQSSRNMPSDTSVA) has biased composition (polar residues). The span at 174 to 184 (SPDYSHSQSSS) shows a compositional bias: low complexity. The segment covering 185-195 (PIANYQESGNS) has biased composition (polar residues). 2 WD repeats span residues 292–334 (NSPN…STSE) and 402–441 (DTGI…PSTP). 2 disordered regions span residues 666-714 (RHST…SPSS) and 892-934 (TAPD…PAQG). The segment covering 669 to 688 (TASPSTVNSGFSTPRSQATG) has biased composition (polar residues). Residues S671 and S673 each carry the phosphoserine modification. T674 carries the post-translational modification Phosphothreonine. A compositionally biased stretch (basic and acidic residues) spans 695–706 (DKGERFETKDKS). Residues 789 to 1076 (MQVALKEEIA…ISEISVASSN (288 aa)) are interaction with dcp2. A Phosphoserine modification is found at S1075.

The protein belongs to the WD repeat EDC4 family. In terms of assembly, interacts with dcp2; via C-terminus.

It is found in the cytoplasm. The protein resides in the P-body. Involved in P-body formation. Acts as a functional homolog of human EDC4, which plays a role in mRNA decapping in the process of mRNA degradation. Enhances the decapping activity of dcp2. Together with edc3, acts as a scaffolding protein sufficient for the phase transition of the components of the 5' to 3' mRNA degradation machinery to form P-bodies. Intermolecular interactions between the edc3 Sm domain and at least 10 helical leucine-rich motifs in dcp2 and pdc1 build the core of the interaction network of this spontaneous clustering process. This Schizosaccharomyces pombe (strain 972 / ATCC 24843) (Fission yeast) protein is Enhancer of mRNA-decapping protein 4-like protein pdc1.